Here is a 384-residue protein sequence, read N- to C-terminus: Putative RNA methyltransferase slr0064 (384 aa).

The region spanning 53–164 is the THUMP domain; it reads LLYRINLWSR…QNHCQLSLDS (112 aa).

The protein belongs to the methyltransferase superfamily.

This Synechocystis sp. (strain ATCC 27184 / PCC 6803 / Kazusa) protein is Putative RNA methyltransferase slr0064.